The sequence spans 317 residues: Acetyl-coenzyme A carboxylase carboxyl transferase subunit alpha (317 aa).

The 255-residue stretch at 39-293 folds into the CoA carboxyltransferase C-terminal domain; the sequence is RLESRVNDAM…GDVIAKALAD (255 aa).

This sequence belongs to the AccA family. In terms of assembly, acetyl-CoA carboxylase is a heterohexamer composed of biotin carboxyl carrier protein (AccB), biotin carboxylase (AccC) and two subunits each of ACCase subunit alpha (AccA) and ACCase subunit beta (AccD).

It localises to the cytoplasm. The catalysed reaction is N(6)-carboxybiotinyl-L-lysyl-[protein] + acetyl-CoA = N(6)-biotinyl-L-lysyl-[protein] + malonyl-CoA. It participates in lipid metabolism; malonyl-CoA biosynthesis; malonyl-CoA from acetyl-CoA: step 1/1. Functionally, component of the acetyl coenzyme A carboxylase (ACC) complex. First, biotin carboxylase catalyzes the carboxylation of biotin on its carrier protein (BCCP) and then the CO(2) group is transferred by the carboxyltransferase to acetyl-CoA to form malonyl-CoA. The sequence is that of Acetyl-coenzyme A carboxylase carboxyl transferase subunit alpha from Agrobacterium fabrum (strain C58 / ATCC 33970) (Agrobacterium tumefaciens (strain C58)).